The chain runs to 173 residues: Gamma-crystallin S-1 (173 aa).

2 Beta/gamma crystallin 'Greek key' domains span residues 2–40 (GKII…RVES) and 41–83 (DWWV…RMLP). The segment at 84–88 (HTGRS) is connecting peptide. 2 consecutive Beta/gamma crystallin 'Greek key' domains span residues 89 to 129 (YRMR…QVMD) and 130 to 172 (GYWI…RRIM).

This sequence belongs to the beta/gamma-crystallin family.

Crystallins are the dominant structural components of the vertebrate eye lens. The polypeptide is Gamma-crystallin S-1 (GS-1) (Chiloscyllium indicum (Slender bamboo shark)).